The chain runs to 420 residues: D-tagatose-1,6-bisphosphate aldolase subunit GatZ (420 aa).

This sequence belongs to the GatZ/KbaZ family. GatZ subfamily. In terms of assembly, forms a complex with GatY.

It participates in carbohydrate metabolism; D-tagatose 6-phosphate degradation; D-glyceraldehyde 3-phosphate and glycerone phosphate from D-tagatose 6-phosphate: step 2/2. Component of the tagatose-1,6-bisphosphate aldolase GatYZ that is required for full activity and stability of the Y subunit. Could have a chaperone-like function for the proper and stable folding of GatY. When expressed alone, GatZ does not show any aldolase activity. Is involved in the catabolism of galactitol. The chain is D-tagatose-1,6-bisphosphate aldolase subunit GatZ from Escherichia coli O8 (strain IAI1).